The following is a 265-amino-acid chain: Short-chain dehydrogenase/reductase fsr5 (265 aa).

Positions 1–32 are cleaved as a signal peptide; the sequence is MASLGKYVSKLAGSRVLVIGGSSGIGFGVAEA. Residues Ser-22, Ser-23, Ile-25, Ser-45, and Lys-50 each contribute to the NADP(+) site. N-linked (GlcNAc...) asparagine glycosylation is present at Asn-62. Positions 88, 130, and 204 each coordinate NADP(+). Asn-218 and Asn-250 each carry an N-linked (GlcNAc...) asparagine glycan.

The protein belongs to the short-chain dehydrogenases/reductases (SDR) family.

In terms of biological role, short-chain dehydrogenase/reductase; part of the gene cluster that mediates the biosynthesis of fusarubins, highly pigmented naphthoquinones responsible for the coloration of the fruiting bodies. The non-reducing polyketide synthase FSR1 is responsible for the condensation of seven acetyl-CoA units to yield a haptaketide. After rings A and B are formed by aldol-type cyclization, the PKS-derived product is released as 6-O-demethylfusarubinaldehyde. Then, two hydroxyl groups at C-5 and C-10 are incorporated by FSR3, and simultaneously hydroxyl groups at C-6 and C-8 are methylated by FSR2. The aldehyde is, on the one hand, reduced by FSR3 to 8-O-methylfusarubin alcohol, which equilibrates mainly with 8-O-methylfusarubin and only small amounts of 8-O-methylnectriafurone. On the other hand, the aldehyde can be oxidized to form 8-O-methylfusarubinic acid, a reaction driven by FSR3 equilibrating with 8-O-methylfusarubinlactone, finally resulting in 8-O-methylanhydrofusarubinlactol after a further reduction step and loss of water. 8-O-Methylfusarubinic acid can also undergo decarboxylation, resulting in 8-O-methyl-13-hydroxynorjavanicin after another hydroxylation step at C-13. Both steps are most likely also accomplished by FSR3. No enzymatic function has been determined so far for either FSR4 and FSR5. Their deletion does not alter the product spectrum, but the possibility that they catalyze specific enzymatic steps during perithecium development cannot be ruled out. FSR4 might possess a regulatory function in the biosynthesis of fusarubins. The chain is Short-chain dehydrogenase/reductase fsr5 from Gibberella fujikuroi (strain CBS 195.34 / IMI 58289 / NRRL A-6831) (Bakanae and foot rot disease fungus).